We begin with the raw amino-acid sequence, 688 residues long: Two-component response regulator ORR23 (688 aa).

Residues 25-140 form the Response regulatory domain; that stretch reads RVLAVDDDPV…ELRNIWQHVI (116 aa). Asp76 carries the 4-aspartylphosphate modification. A disordered region spans residues 161–212; sequence PPNADSDHVHGHVTCGSPDQSGRPSKKRKEYCSEEEDEGEVNTQDIDDPSAP. The span at 193–208 shows a compositional bias: acidic residues; that stretch reads SEEEDEGEVNTQDIDD. A DNA-binding region (myb-like GARP) is located at residues 211-270; the sequence is APKKPRVVWSVELHRKFVAAVNQLGIDKAVPKRILELMNVEKLTRENVASHLQKYRLYLK.

It belongs to the ARR family. Type-B subfamily. Two-component system major event consists of a His-to-Asp phosphorelay between a sensor histidine kinase (HK) and a response regulator (RR). In plants, the His-to-Asp phosphorelay involves an additional intermediate named Histidine-containing phosphotransfer protein (HPt). This multistep phosphorelay consists of a His-Asp-His-Asp sequential transfer of a phosphate group between first a His and an Asp of the HK protein, followed by the transfer to a conserved His of the HPt protein and finally the transfer to an Asp in the receiver domain of the RR protein.

The protein resides in the nucleus. Functionally, transcriptional activator that binds specific DNA sequence. Functions as a response regulator involved in His-to-Asp phosphorelay signal transduction system. Phosphorylation of the Asp residue in the receiver domain activates the ability of the protein to promote the transcription of target genes. May directly activate some type-A response regulators in response to cytokinins. This is Two-component response regulator ORR23 from Oryza sativa subsp. indica (Rice).